A 504-amino-acid polypeptide reads, in one-letter code: Peroxisome proliferator-activated receptor gamma (504 aa).

Phosphoserine; by MAPK is present on S111. The nuclear receptor DNA-binding region spans 135 to 209; sequence AIECRVCGDK…VGMSHNAIRF (75 aa). 2 consecutive NR C4-type zinc fingers follow at residues 138–158 and 175–197; these read CRVC…CEGC and CDLN…FQKC. The interval 204–279 is interaction with FAM120B; sequence HNAIRFGRMP…DKSPFVIYDM (76 aa). The 266-residue stretch at 237-502 folds into the NR LBD domain; that stretch reads DLRALAKHLY…HPLLQEIYKD (266 aa). K251 is covalently cross-linked (Glycyl lysine isopeptide (Lys-Gly) (interchain with G-Cter in ubiquitin)). A 9aaTAD motif is present at residues 494 to 502; that stretch reads PLLQEIYKD.

It belongs to the nuclear hormone receptor family. NR1 subfamily. As to quaternary structure, interacts with FOXO1 (acetylated form). Heterodimer with other nuclear receptors, such as RXRA. The heterodimer with the retinoic acid receptor RXRA is called adipocyte-specific transcription factor ARF6. Interacts with NCOA6 coactivator, leading to a strong increase in transcription of target genes. Interacts with coactivator PPARBP, leading to a mild increase in transcription of target genes. Interacts with NOCA7 in a ligand-inducible manner. Interacts with NCOA1 and NCOA2 LXXLL motifs. Interacts with ASXL1, ASXL2, DNTTIP2, FAM120B, MAP2K1/MEK1, NR0B2, PDPK1, PRDM16, PRMT2 and TGFB1I1. Interacts (when activated by agonist) with PPP5C. Interacts with HELZ2 and THRAP3; the interaction stimulates the transcriptional activity of PPARG. Interacts with PER2, the interaction is ligand dependent and blocks PPARG recruitment to target promoters. Interacts with NOCT. Interacts with ACTN4. Interacts (when in the liganded conformation) with GPS2. Interacts with CRY1 and CRY2 in a ligand-dependent manner. In the absence of hormonal ligand, interacts with TACC1. In macrophages, interacts with PAQR3 and STUB1; the interactions promote PPARG poylubiquitination and STUB1-mediated degradation. Post-translationally, phosphorylated at basal conditions and dephosphorylated when treated with the ligand. May be dephosphorylated by PPP5C. The phosphorylated form may be inactive and dephosphorylation induces adipogenic activity. Ubiquitinated by E3 ubiquitin-protein ligase complex containing FBXO9; leading to proteasomal degradation. Ubiquitinated at Lys-251 by TRIM55 leading to proteasomal degradation. Ubiquitinated by E3 ubiquitin-protein ligase STUB1/CHIP; leading to proteasomal degradation. As to expression, highest expression in adipose tissue and lower in spleen. Very low levels in kidney, intestine, lung and muscle.

It localises to the nucleus. The protein localises to the cytoplasm. PDPK1 activates its transcriptional activity independently of its kinase activity. Functionally, nuclear receptor that binds peroxisome proliferators such as hypolipidemic drugs and fatty acids. Once activated by a ligand, the nuclear receptor binds to DNA specific PPAR response elements (PPRE) and modulates the transcription of its target genes, such as acyl-CoA oxidase. It therefore controls the peroxisomal beta-oxidation pathway of fatty acids. Key regulator of adipocyte differentiation and glucose homeostasis. ARF6 acts as a key regulator of the tissue-specific adipocyte P2 (aP2) enhancer. Acts as a critical regulator of gut homeostasis by suppressing NF-kappa-B-mediated pro-inflammatory responses. Plays a role in the regulation of cardiovascular circadian rhythms by regulating the transcription of BMAL1 in the blood vessels. The protein is Peroxisome proliferator-activated receptor gamma (PPARG) of Sus scrofa (Pig).